We begin with the raw amino-acid sequence, 363 residues long: UDP-N-acetylglucosamine--N-acetylmuramyl-(pentapeptide) pyrophosphoryl-undecaprenol N-acetylglucosamine transferase (363 aa).

UDP-N-acetyl-alpha-D-glucosamine is bound by residues 10–12 (TGG), Asn124, Ser195, Ile250, and Gln295.

This sequence belongs to the glycosyltransferase 28 family. MurG subfamily.

The protein localises to the cell membrane. The catalysed reaction is di-trans,octa-cis-undecaprenyl diphospho-N-acetyl-alpha-D-muramoyl-L-alanyl-D-glutamyl-meso-2,6-diaminopimeloyl-D-alanyl-D-alanine + UDP-N-acetyl-alpha-D-glucosamine = di-trans,octa-cis-undecaprenyl diphospho-[N-acetyl-alpha-D-glucosaminyl-(1-&gt;4)]-N-acetyl-alpha-D-muramoyl-L-alanyl-D-glutamyl-meso-2,6-diaminopimeloyl-D-alanyl-D-alanine + UDP + H(+). The protein operates within cell wall biogenesis; peptidoglycan biosynthesis. Cell wall formation. Catalyzes the transfer of a GlcNAc subunit on undecaprenyl-pyrophosphoryl-MurNAc-pentapeptide (lipid intermediate I) to form undecaprenyl-pyrophosphoryl-MurNAc-(pentapeptide)GlcNAc (lipid intermediate II). The chain is UDP-N-acetylglucosamine--N-acetylmuramyl-(pentapeptide) pyrophosphoryl-undecaprenol N-acetylglucosamine transferase from Halalkalibacterium halodurans (strain ATCC BAA-125 / DSM 18197 / FERM 7344 / JCM 9153 / C-125) (Bacillus halodurans).